Reading from the N-terminus, the 264-residue chain is Ribonuclease H (264 aa).

Residues Gly55–His88 are disordered. Over residues Ser56–Ser85 the composition is skewed to low complexity. At Ser97 the chain carries Phosphoserine. The RNase H type-1 domain maps to Cys120–Ser263. Residues Asp129, Glu171, Asp191, and Asp255 each coordinate Mg(2+).

The protein belongs to the RNase H family. Mg(2+) serves as cofactor.

It carries out the reaction Endonucleolytic cleavage to 5'-phosphomonoester.. Its function is as follows. Endonuclease that specifically degrades the RNA of RNA-DNA hybrids. This chain is Ribonuclease H (rnh1), found in Schizosaccharomyces pombe (strain 972 / ATCC 24843) (Fission yeast).